The following is a 306-amino-acid chain: Ribosomal protein L11 methyltransferase (306 aa).

S-adenosyl-L-methionine contacts are provided by Thr154, Gly179, Asp201, and Asn242.

The protein belongs to the methyltransferase superfamily. PrmA family.

The protein resides in the cytoplasm. It catalyses the reaction L-lysyl-[protein] + 3 S-adenosyl-L-methionine = N(6),N(6),N(6)-trimethyl-L-lysyl-[protein] + 3 S-adenosyl-L-homocysteine + 3 H(+). In terms of biological role, methylates ribosomal protein L11. The chain is Ribosomal protein L11 methyltransferase from Stenotrophomonas maltophilia (strain R551-3).